The primary structure comprises 135 residues: ATP synthase epsilon chain (135 aa).

The protein belongs to the ATPase epsilon chain family. F-type ATPases have 2 components, CF(1) - the catalytic core - and CF(0) - the membrane proton channel. CF(1) has five subunits: alpha(3), beta(3), gamma(1), delta(1), epsilon(1). CF(0) has three main subunits: a, b and c.

The protein resides in the cell inner membrane. Functionally, produces ATP from ADP in the presence of a proton gradient across the membrane. The polypeptide is ATP synthase epsilon chain (Rhizobium johnstonii (strain DSM 114642 / LMG 32736 / 3841) (Rhizobium leguminosarum bv. viciae)).